Consider the following 416-residue polypeptide: Glutamyl-tRNA reductase (416 aa).

Substrate-binding positions include 49–52, S105, 110–112, and Q116; these read TCNR and EPQ. The active-site Nucleophile is C50. 185 to 190 is a binding site for NADP(+); the sequence is GAGETI.

This sequence belongs to the glutamyl-tRNA reductase family. Homodimer.

It carries out the reaction (S)-4-amino-5-oxopentanoate + tRNA(Glu) + NADP(+) = L-glutamyl-tRNA(Glu) + NADPH + H(+). The protein operates within porphyrin-containing compound metabolism; protoporphyrin-IX biosynthesis; 5-aminolevulinate from L-glutamyl-tRNA(Glu): step 1/2. In terms of biological role, catalyzes the NADPH-dependent reduction of glutamyl-tRNA(Glu) to glutamate 1-semialdehyde (GSA). In Shewanella pealeana (strain ATCC 700345 / ANG-SQ1), this protein is Glutamyl-tRNA reductase.